Here is an 83-residue protein sequence, read N- to C-terminus: Cytotoxin A5 (83 aa).

The first 21 residues, 1–21 (MKTLLLTMVVVTIVCLDLGYT), serve as a signal peptide directing secretion. Intrachain disulfides connect C24–C43, C36–C61, C65–C76, and C77–C82.

It belongs to the three-finger toxin family. Short-chain subfamily. Orphan group XV sub-subfamily. In terms of tissue distribution, expressed by the venom gland.

The protein resides in the secreted. It is found in the target cell membrane. Its function is as follows. Non-cytotoxic protein that does not show lytic and hemolytic activities, but can induce aggregation and fusion of sphingomyelin vesicles. It binds to integrin alpha-V/beta-3 (ITGAV/ITGB3) with high affinity, and it inhibits osteoclast differentiation and bone resorption in mice, probably due to binding to integrin alpha-V/beta-3. The chain is Cytotoxin A5 from Naja atra (Chinese cobra).